A 252-amino-acid chain; its full sequence is Expansin-A12 (252 aa).

The N-terminal stretch at 1–23 (MDMKGTYLVTVILLVSTLSVGMC) is a signal peptide. The 112-residue stretch at 45 to 156 (GGACGYDNPY…RRVGCKRRGG (112 aa)) folds into the Expansin-like EG45 domain. An Expansin-like CBD domain is found at 166 to 246 (NFNMVMISNV…SWWFGQTFSS (81 aa)).

The protein belongs to the expansin family. Expansin A subfamily.

It localises to the secreted. It is found in the cell wall. The protein resides in the membrane. Its function is as follows. Causes loosening and extension of plant cell walls by disrupting non-covalent bonding between cellulose microfibrils and matrix glucans. No enzymatic activity has been found. The sequence is that of Expansin-A12 (EXPA12) from Arabidopsis thaliana (Mouse-ear cress).